Reading from the N-terminus, the 235-residue chain is MSIHIGAQQGQIAETILLPGDPLRAKYIAETFLEGAECYNNVRGMLGFTGTYKGKRVSVQGTGMGVPSISIYANELMQSYGVQNLIRVGTCGAIQEDIKVRDVIIAMSASSESQTNRLLFDQIDFAPTANFELLHKAYQVATERNLPVKVGNIFTSDSFYRESLDLYKKLASYQVLAIEMESSALYTLAAKYKRNALSILTVSDHILTGEETSADERQSTFNEMIEVALDAALIK.

H4 contributes to the a purine D-ribonucleoside binding site. Phosphate-binding positions include G20, R24, R43, and 87-90 (RVGT). Residues 179-181 (EME) and 203-204 (SD) contribute to the a purine D-ribonucleoside site. D204 functions as the Proton donor in the catalytic mechanism.

The protein belongs to the PNP/UDP phosphorylase family. Homohexamer; trimer of homodimers.

The catalysed reaction is a purine D-ribonucleoside + phosphate = a purine nucleobase + alpha-D-ribose 1-phosphate. It carries out the reaction a purine 2'-deoxy-D-ribonucleoside + phosphate = a purine nucleobase + 2-deoxy-alpha-D-ribose 1-phosphate. Functionally, catalyzes the reversible phosphorolytic breakdown of the N-glycosidic bond in the beta-(deoxy)ribonucleoside molecules, with the formation of the corresponding free purine bases and pentose-1-phosphate. This chain is Purine nucleoside phosphorylase DeoD-type, found in Brevibacillus brevis (strain 47 / JCM 6285 / NBRC 100599).